The following is a 1157-amino-acid chain: Endo-1,4-beta-xylanase A (1157 aa).

The N-terminal stretch at 1–33 (MMKNNVDRIVSIVTALIMIFGASLFSPPIRVFA) is a signal peptide. 2 consecutive CBM-cenC domains span residues 38 to 189 (INLV…VTTQ) and 195 to 343 (GNVI…VIGE). The GH10 domain occupies 352–675 (QNDIPDLYSV…KPAFWAVVDP (324 aa)). Residue glutamate 495 is the Proton donor of the active site. Residue aspartate 537 is part of the active site. Glutamate 600 acts as the Nucleophile in catalysis. SLH domains follow at residues 1051 to 1114 (KKGV…YSGE) and 1115 to 1157 (FSDV…EMTQ).

It belongs to the glycosyl hydrolase 10 (cellulase F) family.

It carries out the reaction Endohydrolysis of (1-&gt;4)-beta-D-xylosidic linkages in xylans.. Its pathway is glycan degradation; xylan degradation. Functionally, endo-acting enzyme that randomly cleaves the internal xylosidic linkages of the xylan backbone, yielding xylooligosaccharides of various lengths which are further hydrolyzed to xylose molecules by beta-xylosidase (EC 3.2.1.37). Requires at least three xylose residues for catalytic activity. Does not have activity against xylobiose. In Thermoanaerobacterium saccharolyticum, this protein is Endo-1,4-beta-xylanase A (xynA).